A 93-amino-acid chain; its full sequence is Translation initiation factor IF-1 (93 aa).

Residues 1 to 72 (MAKEELIQFE…EKGRLIFRHK (72 aa)) form the S1-like domain. The disordered stretch occupies residues 70 to 93 (RHKDERPGGPPRSGPPRGGQFRRR).

The protein belongs to the IF-1 family. Component of the 30S ribosomal translation pre-initiation complex which assembles on the 30S ribosome in the order IF-2 and IF-3, IF-1 and N-formylmethionyl-tRNA(fMet); mRNA recruitment can occur at any time during PIC assembly.

The protein localises to the cytoplasm. In terms of biological role, one of the essential components for the initiation of protein synthesis. Stabilizes the binding of IF-2 and IF-3 on the 30S subunit to which N-formylmethionyl-tRNA(fMet) subsequently binds. Helps modulate mRNA selection, yielding the 30S pre-initiation complex (PIC). Upon addition of the 50S ribosomal subunit IF-1, IF-2 and IF-3 are released leaving the mature 70S translation initiation complex. The chain is Translation initiation factor IF-1 from Nitrobacter winogradskyi (strain ATCC 25391 / DSM 10237 / CIP 104748 / NCIMB 11846 / Nb-255).